The sequence spans 287 residues: PIH1 domain-containing protein 1 (287 aa).

Belongs to the PIH1 family.

The protein resides in the nucleus. In terms of biological role, involved in the assembly of C/D box small nucleolar ribonucleoprotein (snoRNP) particles. Recruits the SWI/SNF complex to the core promoter of rRNA genes and enhances pre-rRNA transcription. Mediates interaction of TELO2 with the R2TP complex which is necessary for the stability of MTOR and SMG1. Positively regulates the assembly and activity of the mTORC1 complex. The chain is PIH1 domain-containing protein 1 (pih1d1) from Danio rerio (Zebrafish).